A 271-amino-acid polypeptide reads, in one-letter code: Putative pyruvate, phosphate dikinase regulatory protein (271 aa).

Position 147 to 154 (147 to 154) interacts with ADP; the sequence is GLSRTSKT.

This sequence belongs to the pyruvate, phosphate/water dikinase regulatory protein family. PDRP subfamily.

The catalysed reaction is N(tele)-phospho-L-histidyl/L-threonyl-[pyruvate, phosphate dikinase] + ADP = N(tele)-phospho-L-histidyl/O-phospho-L-threonyl-[pyruvate, phosphate dikinase] + AMP + H(+). It catalyses the reaction N(tele)-phospho-L-histidyl/O-phospho-L-threonyl-[pyruvate, phosphate dikinase] + phosphate + H(+) = N(tele)-phospho-L-histidyl/L-threonyl-[pyruvate, phosphate dikinase] + diphosphate. Bifunctional serine/threonine kinase and phosphorylase involved in the regulation of the pyruvate, phosphate dikinase (PPDK) by catalyzing its phosphorylation/dephosphorylation. This is Putative pyruvate, phosphate dikinase regulatory protein from Clostridium tetani (strain Massachusetts / E88).